Here is a 56-residue protein sequence, read N- to C-terminus: UPF0434 protein ECH_0194 (56 aa).

Belongs to the UPF0434 family.

This Ehrlichia chaffeensis (strain ATCC CRL-10679 / Arkansas) protein is UPF0434 protein ECH_0194.